The sequence spans 262 residues: Hydroxyethylthiazole kinase (262 aa).

Methionine 50 contacts substrate. The ATP site is built by arginine 125 and threonine 171. Position 198 (glycine 198) interacts with substrate.

It belongs to the Thz kinase family. Requires Mg(2+) as cofactor.

The catalysed reaction is 5-(2-hydroxyethyl)-4-methylthiazole + ATP = 4-methyl-5-(2-phosphooxyethyl)-thiazole + ADP + H(+). It participates in cofactor biosynthesis; thiamine diphosphate biosynthesis; 4-methyl-5-(2-phosphoethyl)-thiazole from 5-(2-hydroxyethyl)-4-methylthiazole: step 1/1. Its function is as follows. Catalyzes the phosphorylation of the hydroxyl group of 4-methyl-5-beta-hydroxyethylthiazole (THZ). This is Hydroxyethylthiazole kinase from Escherichia coli O157:H7.